Here is a 112-residue protein sequence, read N- to C-terminus: S-adenosylmethionine decarboxylase proenzyme (112 aa).

Ser62 serves as the catalytic Schiff-base intermediate with substrate; via pyruvic acid. Ser62 is subject to Pyruvic acid (Ser); by autocatalysis. His67 functions as the Proton acceptor; for processing activity in the catalytic mechanism. The active-site Proton donor; for catalytic activity is Cys82.

It belongs to the prokaryotic AdoMetDC family. Type 1 subfamily. In terms of assembly, heterotetramer of two alpha and two beta chains arranged as a dimer of alpha/beta heterodimers. It depends on pyruvate as a cofactor. In terms of processing, is synthesized initially as an inactive proenzyme. Formation of the active enzyme involves a self-maturation process in which the active site pyruvoyl group is generated from an internal serine residue via an autocatalytic post-translational modification. Two non-identical subunits are generated from the proenzyme in this reaction, and the pyruvate is formed at the N-terminus of the alpha chain, which is derived from the carboxyl end of the proenzyme. The post-translation cleavage follows an unusual pathway, termed non-hydrolytic serinolysis, in which the side chain hydroxyl group of the serine supplies its oxygen atom to form the C-terminus of the beta chain, while the remainder of the serine residue undergoes an oxidative deamination to produce ammonia and the pyruvoyl group blocking the N-terminus of the alpha chain.

The catalysed reaction is S-adenosyl-L-methionine + H(+) = S-adenosyl 3-(methylsulfanyl)propylamine + CO2. Its pathway is amine and polyamine biosynthesis; S-adenosylmethioninamine biosynthesis; S-adenosylmethioninamine from S-adenosyl-L-methionine: step 1/1. In terms of biological role, catalyzes the decarboxylation of S-adenosylmethionine to S-adenosylmethioninamine (dcAdoMet), the propylamine donor required for the synthesis of the polyamines spermine and spermidine from the diamine putrescine. This Archaeoglobus fulgidus (strain ATCC 49558 / DSM 4304 / JCM 9628 / NBRC 100126 / VC-16) protein is S-adenosylmethionine decarboxylase proenzyme.